Consider the following 20-residue polypeptide: Unknown protein NF019 from 2D-PAGE (20 aa).

The sequence is that of Unknown protein NF019 from 2D-PAGE from Naegleria fowleri (Brain eating amoeba).